A 351-amino-acid polypeptide reads, in one-letter code: Beta-hexosaminidase (351 aa).

Substrate contacts are provided by residues aspartate 62, arginine 70, arginine 134, and 164–165 (KH). Histidine 177 serves as the catalytic Proton donor/acceptor. The active-site Nucleophile is the aspartate 249.

This sequence belongs to the glycosyl hydrolase 3 family. NagZ subfamily. Monomer.

The protein resides in the cytoplasm. It catalyses the reaction Hydrolysis of terminal non-reducing N-acetyl-D-hexosamine residues in N-acetyl-beta-D-hexosaminides.. Its pathway is cell wall biogenesis; peptidoglycan recycling. In terms of biological role, plays a role in peptidoglycan recycling by cleaving the terminal beta-1,4-linked N-acetylglucosamine (GlcNAc) from peptide-linked peptidoglycan fragments, giving rise to free GlcNAc, anhydro-N-acetylmuramic acid and anhydro-N-acetylmuramic acid-linked peptides. The protein is Beta-hexosaminidase of Pasteurella multocida (strain Pm70).